The sequence spans 201 residues: Small ribosomal subunit protein uS4 (201 aa).

The region spanning 91-154 (SRLDNVIYRA…QKMEWFEEAQ (64 aa)) is the S4 RNA-binding domain.

Belongs to the universal ribosomal protein uS4 family. As to quaternary structure, part of the 30S ribosomal subunit. Contacts protein S5. The interaction surface between S4 and S5 is involved in control of translational fidelity.

In terms of biological role, one of the primary rRNA binding proteins, it binds directly to 16S rRNA where it nucleates assembly of the body of the 30S subunit. Functionally, with S5 and S12 plays an important role in translational accuracy. This chain is Small ribosomal subunit protein uS4, found in Corynebacterium aurimucosum (strain ATCC 700975 / DSM 44827 / CIP 107346 / CN-1) (Corynebacterium nigricans).